We begin with the raw amino-acid sequence, 328 residues long: Phosphate acyltransferase (328 aa).

The protein belongs to the PlsX family. As to quaternary structure, homodimer. Probably interacts with PlsY.

It is found in the cytoplasm. It carries out the reaction a fatty acyl-[ACP] + phosphate = an acyl phosphate + holo-[ACP]. The protein operates within lipid metabolism; phospholipid metabolism. In terms of biological role, catalyzes the reversible formation of acyl-phosphate (acyl-PO(4)) from acyl-[acyl-carrier-protein] (acyl-ACP). This enzyme utilizes acyl-ACP as fatty acyl donor, but not acyl-CoA. This is Phosphate acyltransferase from Staphylococcus haemolyticus (strain JCSC1435).